Consider the following 489-residue polypeptide: Rhamnulokinase (489 aa).

13–17 (ASSGR) serves as a coordination point for ATP. Cysteine 68 and cysteine 222 are oxidised to a cystine. Substrate-binding positions include glycine 83 and 236–238 (HDT). Aspartate 237 serves as the catalytic Proton acceptor. Position 259 (threonine 259) interacts with ATP. Position 296 (asparagine 296) interacts with substrate. Glutamine 304 contacts ATP. Cysteine 353 and cysteine 370 are oxidised to a cystine. Residue glycine 402 coordinates ATP. A disulfide bond links cysteine 413 and cysteine 417.

Belongs to the rhamnulokinase family. It depends on Mg(2+) as a cofactor.

It catalyses the reaction L-rhamnulose + ATP = L-rhamnulose 1-phosphate + ADP + H(+). It functions in the pathway carbohydrate degradation; L-rhamnose degradation; glycerone phosphate from L-rhamnose: step 2/3. In terms of biological role, involved in the catabolism of L-rhamnose (6-deoxy-L-mannose). Catalyzes the transfer of the gamma-phosphate group from ATP to the 1-hydroxyl group of L-rhamnulose to yield L-rhamnulose 1-phosphate. The chain is Rhamnulokinase from Salmonella agona (strain SL483).